We begin with the raw amino-acid sequence, 535 residues long: BAR/IMD domain-containing adapter protein 2 (535 aa).

Residues 1 to 250 form the IMD domain; that stretch reads MSLSRSEEMH…VQLMQQMANS (250 aa). Residues 88–153 are a coiled coil; the sequence is NQLEETLKSF…LRKKSQGSKN (66 aa). A phosphoserine mark is found at S262, S324, S326, and S337. Residues 299–370 form a disordered region; the sequence is VMNGVAGPDS…TLPRSSSMAA (72 aa). A compositionally biased stretch (low complexity) spans 321–335; the sequence is QPKSLSPPQSQSKLS. T341 bears the Phosphothreonine mark. S347 carries the post-translational modification Phosphoserine. Polar residues predominate over residues 349-368; the sequence is TPKNSYATTENKTLPRSSSM. At T361 the chain carries Phosphothreonine. Residues S367, S385, S396, and S455 each carry the phosphoserine modification. The 64-residue stretch at 375–438 folds into the SH3 domain; sequence NGRMRVKAIF…PFSYTRVLDS (64 aa). The interval 445–477 is disordered; that stretch reads HMSLQQGKSSSTGNLLDKDDLALPPPDYGTSSR. Over residues 447-458 the composition is skewed to polar residues; the sequence is SLQQGKSSSTGN.

Homodimer. Interacts with CDC42 and RAC1 that have been activated by GTP binding. Binds DIAPH1. Interacts with ATN1, ADGRB1, SHANK1, SHANK2, SHANK3, TIAM1, WASF1 and WASF2. Interacts with ENAH after recruitment of CDC42. Interacts with EPS8. In terms of processing, phosphorylated on tyrosine residues by INSR in response to insulin treatment. Detected in liver, brain, olfactory bulb, brain cortex, caudate putamen, hypothalamus and cerebellum.

The protein localises to the cytoplasm. Its subcellular location is the membrane. It is found in the cell projection. It localises to the filopodium. The protein resides in the ruffle. The protein localises to the cytoskeleton. Adapter protein that links membrane-bound small G-proteins to cytoplasmic effector proteins. Necessary for CDC42-mediated reorganization of the actin cytoskeleton and for RAC1-mediated membrane ruffling. Involved in the regulation of the actin cytoskeleton by WASF family members and the Arp2/3 complex. Plays a role in neurite growth. Acts syngeristically with ENAH to promote filipodia formation. Plays a role in the reorganization of the actin cytoskeleton in response to bacterial infection. Participates in actin bundling when associated with EPS8, promoting filopodial protrusions. In Mus musculus (Mouse), this protein is BAR/IMD domain-containing adapter protein 2 (Baiap2).